The chain runs to 285 residues: Small ribosomal subunit biogenesis GTPase RsgA (285 aa).

In terms of domain architecture, CP-type G spans lysine 61–phenylalanine 215. GTP-binding positions include threonine 110–aspartate 113 and glycine 159–serine 167. Cysteine 239, cysteine 244, histidine 246, and cysteine 254 together coordinate Zn(2+).

This sequence belongs to the TRAFAC class YlqF/YawG GTPase family. RsgA subfamily. In terms of assembly, monomer. Associates with 30S ribosomal subunit, binds 16S rRNA. The cofactor is Zn(2+).

The protein localises to the cytoplasm. In terms of biological role, one of several proteins that assist in the late maturation steps of the functional core of the 30S ribosomal subunit. Helps release RbfA from mature subunits. May play a role in the assembly of ribosomal proteins into the subunit. Circularly permuted GTPase that catalyzes slow GTP hydrolysis, GTPase activity is stimulated by the 30S ribosomal subunit. This is Small ribosomal subunit biogenesis GTPase RsgA from Mesomycoplasma hyopneumoniae (strain 7448) (Mycoplasma hyopneumoniae).